The sequence spans 461 residues: Lysosomal proton-coupled steroid conjugate and bile acid symporter SLC46A3 (461 aa).

Positions 1-25 are cleaved as a signal peptide; sequence MKILFVEPAIFLSAFAMTLTGPLTT. The Extracellular segment spans residues 26–73; the sequence is QYVYRRIWEETGNYTFSSDSNISECEKNKSSPIFAFQEEVQKKVSRFN. Residues Asn-38, Asn-46, and Asn-53 are each glycosylated (N-linked (GlcNAc...) asparagine). The chain crosses the membrane as a helical span at residues 74–94; the sequence is LQMDISGLIPGLVSTFILLSI. The Cytoplasmic portion of the chain corresponds to 95-101; the sequence is SDHYGRK. The chain crosses the membrane as a helical span at residues 102 to 124; the sequence is FPMILSSVGALATSVWLCLLCYF. Residues 125–133 are Extracellular-facing; the sequence is AFPFQLLIA. A helical transmembrane segment spans residues 134-156; that stretch reads STFIGAFCGNYTTFWGACFAYIV. At 157 to 170 the chain is on the cytoplasmic side; that stretch reads DQCKEHKQKTIRIA. A helical transmembrane segment spans residues 171–191; that stretch reads IIDFLLGLVTGLTGLSSGYFI. Topologically, residues 192–197 are extracellular; that stretch reads RELGFE. The helical transmembrane segment at 198-218 threads the bilayer; it reads WSFLIIAVSLAVNLIYILFFL. Topologically, residues 219–261 are cytoplasmic; that stretch reads GDPVKECSSQNVTMSCSEGFKNLFYRTYMLFKNASGKRRFLLC. The helical transmembrane segment at 262–282 threads the bilayer; that stretch reads LLLFTVITYFFVVIGIAPIFI. The Extracellular segment spans residues 283 to 294; that stretch reads LYELDSPLCWNE. A helical membrane pass occupies residues 295–315; that stretch reads VFIGYGSALGSASFLTSFLGI. Topologically, residues 316–324 are cytoplasmic; sequence WLFSYCMED. A helical transmembrane segment spans residues 325 to 345; the sequence is IHMAFIGIFTTMTGMAMTAFA. Over 346-347 the chain is Extracellular; that stretch reads ST. The chain crosses the membrane as a helical span at residues 348-368; it reads TLMMFLARVPFLFTIVPFSVL. The Cytoplasmic portion of the chain corresponds to 369 to 382; that stretch reads RSMLSKVVRSTEQG. The chain crosses the membrane as a helical span at residues 383–403; that stretch reads TLFACIAFLETLGGVTAVSTF. The Extracellular portion of the chain corresponds to 404–415; the sequence is NGIYSATVAWYP. The helical transmembrane segment at 416–436 threads the bilayer; that stretch reads GFTFLLSAGLLLLPAISLCVV. At 437–461 the chain is on the cytoplasmic side; that stretch reads KCTSWNEGSYELLIQEESSEDASDR. The Tyrosine-based lysosomal-sorting motif motif lies at 446–449; the sequence is YELL.

It belongs to the major facilitator superfamily. SLC46A family.

The protein localises to the lysosome membrane. It carries out the reaction estrone 3-sulfate(out) + n H(+)(out) = estrone 3-sulfate(in) + n H(+)(in). The catalysed reaction is 25-hydroxyvitamin D3 sulfate(out) + n H(+)(out) = 25-hydroxyvitamin D3 sulfate(in) + n H(+)(in). The enzyme catalyses cholate(out) + n H(+)(out) = cholate(in) + n H(+)(in). It catalyses the reaction glycocholate(out) + n H(+)(out) = glycocholate(in) + n H(+)(in). It carries out the reaction taurocholate(out) + n H(+)(out) = taurocholate(in) + n H(+)(in). The catalysed reaction is dehydroepiandrosterone 3-sulfate(out) + n H(+)(out) = dehydroepiandrosterone 3-sulfate(in) + n H(+)(in). The enzyme catalyses N-acetyl-D-muramoyl-L-alanyl-D-isoglutamine(out) + n H(+)(out) = N-acetyl-D-muramoyl-L-alanyl-D-isoglutamine(in) + n H(+)(in). It catalyses the reaction 2',3'-cGAMP(out) + n H(+)(out) = 2',3'-cGAMP(in) + n H(+)(in). Functionally, lysosomal proton-coupled steroid conjugate and bile acid transporter. Preferentially recognizes lipophilic steroid conjugates or bile acis as endogenous substrates and seems to mediate escape from lysosomes to the cytoplasm. Modulates hepatic cytosolic copper homeostasis, maybe acting as a lysosomal copper transporter and sequestering copper ions in the lysosome. Transports catabolites of non-cleavable antibody-drug conjugates from the lysosome to the cytoplasm. Delivers pathogen-associated molecular patterns to cytosolic pattern recognition receptors as part of the innate immune response to microbes. Selectively transports bacterial muramyl dipeptide (MDP) into the cytosol for recognition by NOD2, triggering inflammatory responses. Likely acts as a redundant importer of cyclic GMP-AMP dinucleotides (cGAMPs) in monocyte and macrophage cell lineages. The transport mechanism, its electrogenicity and stoichiometry remain to be elucidated. This Homo sapiens (Human) protein is Lysosomal proton-coupled steroid conjugate and bile acid symporter SLC46A3.